Here is a 930-residue protein sequence, read N- to C-terminus: Probable outer membrane protein pmp8 (930 aa).

An N-terminal signal peptide occupies residues 1-26; that stretch reads MKIPLHKLLISSTLVTPILLSIATYG. The region spanning 636 to 930 is the Autotransporter domain; it reads SIYQQRGLWA…NVDCGLRYSF (295 aa).

Belongs to the PMP outer membrane protein family.

Its subcellular location is the secreted. It localises to the cell wall. It is found in the cell outer membrane. The polypeptide is Probable outer membrane protein pmp8 (pmp8) (Chlamydia pneumoniae (Chlamydophila pneumoniae)).